Here is a 416-residue protein sequence, read N- to C-terminus: MSKLKYFFPDSQDFIDPSFDFVRETRNEHRVRQRDDHYPHEVFPHPYDGMLVSKAVVDGLGGGESKYTRAQRLRYFRNGMKHFFRLPDNMQTMGDCGAFTYVNQDVPPYRVEEVIEFYETSRFNYGVSLDHIIFGYEKPGESFSGEVLAECRRRQDITLTLAQDFLVKSQKSCFTPFGVAHGWNKKSYRQSVEALLAMGYKNITMGGMVPLKTAQILETLEEIKPLLKSDTQVHLLGIARPESFADFIRLGVTSIDSTTPLQQAFKDRKNNYHTPEGRAYTAVRVPQFDANPSLSRKIKSGVIDQDVARHLEKDAMHALFEYDNNALSLEKTLEAVLAYERLHSGEKEAEKIRADYERTLGDRPWRKCECNICRSIGINVIIFRGAERNRRRGFHNIQVLYNRLQYTLSLRSEDKS.

The active-site Proton acceptor is Asp-95. The active-site Nucleophile is the Asp-256. Zn(2+) is bound by residues Cys-368, Cys-370, Cys-373, and His-395.

Belongs to the DNA-guanine transglycosylase family. The cofactor is Zn(2+).

In terms of biological role, part of the dpd cluster involved in the insertion of 7-deazaguanine derivatives in DNA. DpdA may insert 7-cyano-7-deazaguanine (preQ0) into DNA with the help of DpdB. DpdA and dpdB are necessary and sufficient to synthesize 2'-deoxy-7-cyano-7-deazaguanosine (dPreQ0). In Salmonella montevideo, this protein is DNA-guanine transglycosylase.